The following is a 337-amino-acid chain: GTP 3',8-cyclase (337 aa).

Residues 17–243 (PFQRQYYYLR…HKSHTDGPAK (227 aa)) form the Radical SAM core domain. Arg26 is a GTP binding site. Residues Cys33 and Cys37 each contribute to the [4Fe-4S] cluster site. Tyr39 lines the S-adenosyl-L-methionine pocket. Cys40 is a binding site for [4Fe-4S] cluster. Arg76 is a binding site for GTP. Residue Gly80 participates in S-adenosyl-L-methionine binding. Residue Thr107 participates in GTP binding. Ser131 provides a ligand contact to S-adenosyl-L-methionine. Lys168 is a binding site for GTP. Met202 is a binding site for S-adenosyl-L-methionine. Residues Cys265 and Cys268 each contribute to the [4Fe-4S] cluster site. 270 to 272 (RLR) is a binding site for GTP. Cys282 contributes to the [4Fe-4S] cluster binding site.

This sequence belongs to the radical SAM superfamily. MoaA family. Monomer and homodimer. Requires [4Fe-4S] cluster as cofactor.

The enzyme catalyses GTP + AH2 + S-adenosyl-L-methionine = (8S)-3',8-cyclo-7,8-dihydroguanosine 5'-triphosphate + 5'-deoxyadenosine + L-methionine + A + H(+). The protein operates within cofactor biosynthesis; molybdopterin biosynthesis. Its function is as follows. Catalyzes the cyclization of GTP to (8S)-3',8-cyclo-7,8-dihydroguanosine 5'-triphosphate. This chain is GTP 3',8-cyclase, found in Haemophilus influenzae (strain PittGG).